The primary structure comprises 128 residues: NADH-ubiquinone oxidoreductase chain 3 (128 aa).

The next 3 helical transmembrane spans lie at 3-23 (TIYT…NYLI), 52-72 (VAFI…SSIL), and 84-104 (YGLS…VYEI).

The protein belongs to the complex I subunit 3 family.

It is found in the mitochondrion membrane. The enzyme catalyses a ubiquinone + NADH + 5 H(+)(in) = a ubiquinol + NAD(+) + 4 H(+)(out). In terms of biological role, core subunit of the mitochondrial membrane respiratory chain NADH dehydrogenase (Complex I) that is believed to belong to the minimal assembly required for catalysis. Complex I functions in the transfer of electrons from NADH to the respiratory chain. The immediate electron acceptor for the enzyme is believed to be ubiquinone. This Debaryomyces hansenii (strain ATCC 36239 / CBS 767 / BCRC 21394 / JCM 1990 / NBRC 0083 / IGC 2968) (Yeast) protein is NADH-ubiquinone oxidoreductase chain 3 (ND3).